The primary structure comprises 354 residues: Protein RecA (354 aa).

An ATP-binding site is contributed by 65 to 72 (GPESSGKT).

It belongs to the RecA family.

Its subcellular location is the cytoplasm. Can catalyze the hydrolysis of ATP in the presence of single-stranded DNA, the ATP-dependent uptake of single-stranded DNA by duplex DNA, and the ATP-dependent hybridization of homologous single-stranded DNAs. It interacts with LexA causing its activation and leading to its autocatalytic cleavage. The chain is Protein RecA from Aeromonas hydrophila subsp. hydrophila (strain ATCC 7966 / DSM 30187 / BCRC 13018 / CCUG 14551 / JCM 1027 / KCTC 2358 / NCIMB 9240 / NCTC 8049).